Here is a 172-residue protein sequence, read N- to C-terminus: Ribosome maturation factor RimP (172 aa).

It belongs to the RimP family.

The protein resides in the cytoplasm. Its function is as follows. Required for maturation of 30S ribosomal subunits. This Nitratidesulfovibrio vulgaris (strain ATCC 29579 / DSM 644 / CCUG 34227 / NCIMB 8303 / VKM B-1760 / Hildenborough) (Desulfovibrio vulgaris) protein is Ribosome maturation factor RimP.